Here is a 1040-residue protein sequence, read N- to C-terminus: Beta-galactosidase (1040 aa).

Substrate contacts are provided by Asn-111 and Asp-210. A Na(+)-binding site is contributed by Asp-210. Mg(2+) contacts are provided by Glu-427, His-429, and Glu-472. Substrate contacts are provided by residues Glu-472 and 548–551; that span reads EYAH. Glu-472 functions as the Proton donor in the catalytic mechanism. Glu-548 acts as the Nucleophile in catalysis. Asn-608 is a binding site for Mg(2+). Na(+) contacts are provided by Phe-612 and Asp-615. Positions 615 and 1016 each coordinate substrate.

It belongs to the glycosyl hydrolase 2 family. Homotetramer. Mg(2+) is required as a cofactor. Requires Na(+) as cofactor.

The enzyme catalyses Hydrolysis of terminal non-reducing beta-D-galactose residues in beta-D-galactosides.. The protein is Beta-galactosidase of Pectobacterium atrosepticum (strain SCRI 1043 / ATCC BAA-672) (Erwinia carotovora subsp. atroseptica).